A 260-amino-acid chain; its full sequence is Thiazole synthase (260 aa).

The active-site Schiff-base intermediate with DXP is the Lys-96. Residues Gly-157, 184-185 (AG), and 206-207 (NT) contribute to the 1-deoxy-D-xylulose 5-phosphate site.

This sequence belongs to the ThiG family. In terms of assembly, homotetramer. Forms heterodimers with either ThiH or ThiS.

The protein resides in the cytoplasm. The catalysed reaction is [ThiS sulfur-carrier protein]-C-terminal-Gly-aminoethanethioate + 2-iminoacetate + 1-deoxy-D-xylulose 5-phosphate = [ThiS sulfur-carrier protein]-C-terminal Gly-Gly + 2-[(2R,5Z)-2-carboxy-4-methylthiazol-5(2H)-ylidene]ethyl phosphate + 2 H2O + H(+). Its pathway is cofactor biosynthesis; thiamine diphosphate biosynthesis. Its function is as follows. Catalyzes the rearrangement of 1-deoxy-D-xylulose 5-phosphate (DXP) to produce the thiazole phosphate moiety of thiamine. Sulfur is provided by the thiocarboxylate moiety of the carrier protein ThiS. In vitro, sulfur can be provided by H(2)S. The chain is Thiazole synthase from Nitrobacter winogradskyi (strain ATCC 25391 / DSM 10237 / CIP 104748 / NCIMB 11846 / Nb-255).